The following is a 95-amino-acid chain: Glutamyl-tRNA(Gln) amidotransferase subunit C 1 (95 aa).

It belongs to the GatC family. In terms of assembly, heterotrimer of A, B and C subunits.

It carries out the reaction L-glutamyl-tRNA(Gln) + L-glutamine + ATP + H2O = L-glutaminyl-tRNA(Gln) + L-glutamate + ADP + phosphate + H(+). It catalyses the reaction L-aspartyl-tRNA(Asn) + L-glutamine + ATP + H2O = L-asparaginyl-tRNA(Asn) + L-glutamate + ADP + phosphate + 2 H(+). Its function is as follows. Allows the formation of correctly charged Asn-tRNA(Asn) or Gln-tRNA(Gln) through the transamidation of misacylated Asp-tRNA(Asn) or Glu-tRNA(Gln) in organisms which lack either or both of asparaginyl-tRNA or glutaminyl-tRNA synthetases. The reaction takes place in the presence of glutamine and ATP through an activated phospho-Asp-tRNA(Asn) or phospho-Glu-tRNA(Gln). This is Glutamyl-tRNA(Gln) amidotransferase subunit C 1 (gatC1) from Clostridium acetobutylicum (strain ATCC 824 / DSM 792 / JCM 1419 / IAM 19013 / LMG 5710 / NBRC 13948 / NRRL B-527 / VKM B-1787 / 2291 / W).